Here is a 200-residue protein sequence, read N- to C-terminus: Ribonuclease HII (200 aa).

The RNase H type-2 domain occupies 6-200 (ESIAGVDEVG…KLFAVHGSLT (195 aa)). A divalent metal cation is bound by residues D12, E13, and D108.

This sequence belongs to the RNase HII family. It depends on Mn(2+) as a cofactor. Requires Mg(2+) as cofactor.

It localises to the cytoplasm. The enzyme catalyses Endonucleolytic cleavage to 5'-phosphomonoester.. In terms of biological role, endonuclease that specifically degrades the RNA of RNA-DNA hybrids. The sequence is that of Ribonuclease HII from Prochlorococcus marinus (strain MIT 9303).